A 205-amino-acid chain; its full sequence is Thymidine kinase (205 aa).

Residues 9–16 (SAMNAGKS) and 87–90 (DECQ) contribute to the ATP site. Glu88 acts as the Proton acceptor in catalysis. 4 residues coordinate Zn(2+): Cys145, Cys147, Cys182, and His185.

It belongs to the thymidine kinase family. Homotetramer.

The protein resides in the cytoplasm. It catalyses the reaction thymidine + ATP = dTMP + ADP + H(+). Its activity is regulated as follows. Allosteric enzyme which is feedback inhibited by dTTP and activated by a number of dNDP and dNTP. Its function is as follows. Phosphorylates both thymidine and deoxyuridine. The chain is Thymidine kinase from Escherichia coli (strain K12).